Reading from the N-terminus, the 294-residue chain is Formamidopyrimidine-DNA glycosylase (294 aa).

The Schiff-base intermediate with DNA role is filled by Pro2. The active-site Proton donor is Glu3. Lys58 (proton donor; for beta-elimination activity) is an active-site residue. DNA is bound by residues His105, Arg124, and Lys167. The segment at Gln258–Lys294 adopts an FPG-type zinc-finger fold. Arg284 (proton donor; for delta-elimination activity) is an active-site residue.

The protein belongs to the FPG family. Monomer. The cofactor is Zn(2+).

The catalysed reaction is Hydrolysis of DNA containing ring-opened 7-methylguanine residues, releasing 2,6-diamino-4-hydroxy-5-(N-methyl)formamidopyrimidine.. It catalyses the reaction 2'-deoxyribonucleotide-(2'-deoxyribose 5'-phosphate)-2'-deoxyribonucleotide-DNA = a 3'-end 2'-deoxyribonucleotide-(2,3-dehydro-2,3-deoxyribose 5'-phosphate)-DNA + a 5'-end 5'-phospho-2'-deoxyribonucleoside-DNA + H(+). Functionally, involved in base excision repair of DNA damaged by oxidation or by mutagenic agents. Acts as a DNA glycosylase that recognizes and removes damaged bases. Has a preference for oxidized purines, such as 7,8-dihydro-8-oxoguanine (8-oxoG). Has AP (apurinic/apyrimidinic) lyase activity and introduces nicks in the DNA strand. Cleaves the DNA backbone by beta-delta elimination to generate a single-strand break at the site of the removed base with both 3'- and 5'-phosphates. The protein is Formamidopyrimidine-DNA glycosylase of Afipia carboxidovorans (strain ATCC 49405 / DSM 1227 / KCTC 32145 / OM5) (Oligotropha carboxidovorans).